Here is an 871-residue protein sequence, read N- to C-terminus: Chaperone protein ClpB 1 (871 aa).

The region spanning 6–147 is the Clp R domain; that stretch reads PNQFTEKAWA…REAIQQIRGS (142 aa). Repeat stretches follow at residues 9 to 73 and 84 to 147; these read FTEK…ISRQ and LGQS…IRGS. The NBD1 stretch occupies residues 160 to 341; it reads AALEKYGRDL…RRFQQVYVDQ (182 aa). Position 207–214 (207–214) interacts with ATP; the sequence is GEPGVGKT. The tract at residues 342–550 is linker; sequence PSVEDTISIL…IAEIISKWTG (209 aa). Residues 392–526 are a coiled coil; sequence IDLVDEAAAK…AEAKLREIQV (135 aa). The tract at residues 560-771 is NBD2; that stretch reads EAQKLLHLEE…RVDEFIIFHS (212 aa). 610 to 617 lines the ATP pocket; sequence GPTGVGKT. The tract at residues 772–871 is C-terminal; the sequence is LRKDQLRQIV…FRRQVELATV (100 aa).

The protein belongs to the ClpA/ClpB family. As to quaternary structure, homohexamer. The oligomerization is ATP-dependent.

The protein localises to the cytoplasm. Functionally, part of a stress-induced multi-chaperone system, it is involved in the recovery of the cell from heat-induced damage, in cooperation with DnaK, DnaJ and GrpE. Acts before DnaK, in the processing of protein aggregates. Protein binding stimulates the ATPase activity; ATP hydrolysis unfolds the denatured protein aggregates, which probably helps expose new hydrophobic binding sites on the surface of ClpB-bound aggregates, contributing to the solubilization and refolding of denatured protein aggregates by DnaK. The chain is Chaperone protein ClpB 1 (clpB1) from Thermosynechococcus vestitus (strain NIES-2133 / IAM M-273 / BP-1).